The chain runs to 204 residues: Large ribosomal subunit protein eL15 (204 aa).

Belongs to the eukaryotic ribosomal protein eL15 family. Component of the large ribosomal subunit.

The protein localises to the cytoplasm. Functionally, component of the large ribosomal subunit. The ribosome is a large ribonucleoprotein complex responsible for the synthesis of proteins in the cell. The protein is Large ribosomal subunit protein eL15 (rpl15) of Megalobrama amblycephala (Chinese blunt snout bream).